The primary structure comprises 141 residues: Small ribosomal subunit protein uS11 (141 aa).

This sequence belongs to the universal ribosomal protein uS11 family. Part of the 30S ribosomal subunit.

Functionally, located on the platform of the 30S subunit. This Pyrobaculum calidifontis (strain DSM 21063 / JCM 11548 / VA1) protein is Small ribosomal subunit protein uS11.